The chain runs to 197 residues: A-type ATP synthase subunit E (197 aa).

It belongs to the V-ATPase E subunit family. As to quaternary structure, has multiple subunits with at least A(3), B(3), C, D, E, F, H, I and proteolipid K(x).

The protein localises to the cell membrane. In terms of biological role, component of the A-type ATP synthase that produces ATP from ADP in the presence of a proton gradient across the membrane. The sequence is that of A-type ATP synthase subunit E from Thermococcus gammatolerans (strain DSM 15229 / JCM 11827 / EJ3).